The chain runs to 334 residues: Oligopeptide transport ATP-binding protein OppF (334 aa).

The 254-residue stretch at 12–265 (LEIADLKVHF…PLHPYTRALM (254 aa)) folds into the ABC transporter domain. 57 to 64 (GESGCGKS) is an ATP binding site.

Belongs to the ABC transporter superfamily. In terms of assembly, the complex is composed of two ATP-binding proteins (OppD and OppF), two transmembrane proteins (OppB and OppC) and a solute-binding protein (OppA or MppA).

The protein localises to the cell inner membrane. The catalysed reaction is a [peptide](out) + ATP + H2O = a [peptide](in) + ADP + phosphate + H(+). It catalyses the reaction L-alanyl-gamma-D-glutamyl-meso-2,6-diaminopimelate(out) + ATP + H2O = L-alanyl-gamma-D-glutamyl-meso-2,6-diaminopimelate(in) + ADP + phosphate + H(+). Functionally, part of the ABC transporter complex OppABCDF involved in the uptake of oligopeptides and of the ABC transporter complex MppA-OppBCDF involved in the uptake of the cell wall murein tripeptide L-alanyl-gamma-D-glutamyl-meso-diaminopimelate. Probably responsible for energy coupling to the transport system. Plays an important nutritional role and is involved in the recycling of cell wall peptides. The chain is Oligopeptide transport ATP-binding protein OppF (oppF) from Escherichia coli (strain K12).